The primary structure comprises 455 residues: Glutamyl-tRNA reductase (455 aa).

Residues Thr-49–Arg-52, Ser-109, Glu-114–Gln-116, and Gln-120 contribute to the substrate site. Cys-50 functions as the Nucleophile in the catalytic mechanism. Gly-189–Gly-194 is a binding site for NADP(+).

The protein belongs to the glutamyl-tRNA reductase family. In terms of assembly, homodimer.

The enzyme catalyses (S)-4-amino-5-oxopentanoate + tRNA(Glu) + NADP(+) = L-glutamyl-tRNA(Glu) + NADPH + H(+). Its pathway is porphyrin-containing compound metabolism; protoporphyrin-IX biosynthesis; 5-aminolevulinate from L-glutamyl-tRNA(Glu): step 1/2. Its function is as follows. Catalyzes the NADPH-dependent reduction of glutamyl-tRNA(Glu) to glutamate 1-semialdehyde (GSA). The sequence is that of Glutamyl-tRNA reductase from Geobacillus thermodenitrificans (strain NG80-2).